Consider the following 117-residue polypeptide: Large ribosomal subunit protein bL20c (117 aa).

Belongs to the bacterial ribosomal protein bL20 family.

Its subcellular location is the plastid. It localises to the chloroplast. Binds directly to 23S ribosomal RNA and is necessary for the in vitro assembly process of the 50S ribosomal subunit. It is not involved in the protein synthesizing functions of that subunit. This is Large ribosomal subunit protein bL20c from Carica papaya (Papaya).